We begin with the raw amino-acid sequence, 82 residues long: MKKFLIALVKAYQRWISPLFPLSCRFCPTCSVYMIQAIEKHGLKGVLMGIARILRCHPLSETGDDPVPDYFSLKRKKTPLDN.

This sequence belongs to the UPF0161 family.

Its subcellular location is the cell membrane. Its function is as follows. Could be involved in insertion of integral membrane proteins into the membrane. In Streptococcus thermophilus (strain ATCC BAA-491 / LMD-9), this protein is Putative membrane protein insertion efficiency factor.